We begin with the raw amino-acid sequence, 305 residues long: Mycothiol acetyltransferase (305 aa).

2 consecutive N-acetyltransferase domains span residues 10-154 (DRLD…VVLE) and 156-305 (ISLR…YARA). Position 38 (Glu38) interacts with 1D-myo-inositol 2-(L-cysteinylamino)-2-deoxy-alpha-D-glucopyranoside. Acetyl-CoA is bound at residue 82–84 (LAV). Residues Glu183, Lys225, and Glu238 each contribute to the 1D-myo-inositol 2-(L-cysteinylamino)-2-deoxy-alpha-D-glucopyranoside site. Acetyl-CoA contacts are provided by residues 242 to 244 (VAI) and 249 to 255 (QGRGLGR). Tyr276 serves as a coordination point for 1D-myo-inositol 2-(L-cysteinylamino)-2-deoxy-alpha-D-glucopyranoside. An acetyl-CoA-binding site is contributed by 281–286 (NASALH).

This sequence belongs to the acetyltransferase family. MshD subfamily. In terms of assembly, monomer.

It catalyses the reaction 1D-myo-inositol 2-(L-cysteinylamino)-2-deoxy-alpha-D-glucopyranoside + acetyl-CoA = mycothiol + CoA + H(+). Catalyzes the transfer of acetyl from acetyl-CoA to desacetylmycothiol (Cys-GlcN-Ins) to form mycothiol. The chain is Mycothiol acetyltransferase from Rhodococcus opacus (strain B4).